Consider the following 471-residue polypeptide: Trigger factor (471 aa).

A PPIase FKBP-type domain is found at 169 to 254; sequence EDRVTIDYLG…VKEVAKPNEL (86 aa). A disordered region spans residues 435–471; sequence VSKEELTAEDEDAASEAKPAKKAAAKKKAEEGKSEEA. Residues 461 to 471 show a composition bias toward basic and acidic residues; it reads KKAEEGKSEEA.

This sequence belongs to the FKBP-type PPIase family. Tig subfamily.

The protein localises to the cytoplasm. The enzyme catalyses [protein]-peptidylproline (omega=180) = [protein]-peptidylproline (omega=0). Involved in protein export. Acts as a chaperone by maintaining the newly synthesized protein in an open conformation. Functions as a peptidyl-prolyl cis-trans isomerase. The polypeptide is Trigger factor (Brucella abortus (strain S19)).